An 8799-amino-acid polypeptide reads, in one-letter code: Nesprin-1 (8799 aa).

The tract at residues 1–289 is actin-binding; sequence MATSRASSRS…TQYPDIHGAG (289 aa). Topologically, residues 1–8748 are cytoplasmic; the sequence is MATSRASSRS…GRAFLFRILR (8748 aa). Calponin-homology (CH) domains follow at residues 27-134 and 178-283; these read IVQK…LYFQ and GNAK…TQYP. Spectrin repeat units lie at residues 314–397, 398–502, 503–609, 610–703, 704–815, 816–923, 924–1024, 1025–1122, 1123–1246, 1247–1333, 1334–1442, 1443–1548, 1549–1651, 1652–1761, 1762–1877, 1878–1974, 1975–2079, 2080–2193, 2194–2301, 2302–2399, 2400–2511, 2512–2617, 2618–2729, 2730–2836, 2837–2960, 2961–3060, 3061–3169, 3170–3273, 3274–3385, 3386–3488, 3489–3591, 3592–3718, 3719–3812, 3813–3918, 3919–4026, 4027–4137, 4138–4233, 4234–4337, 4338–4449, 4450–4558, 4559–4667, 4668–4774, 4775–4880, 4881–4989, 4990–5097, 5098–5207, 5208–5316, 5317–5422, 5423–5520, 5521–5628, 5629–5745, and 5746–5851; these read RDDR…SRLF, DWHI…HLMK, MEFL…SMLE, EVIS…YARA, DEMD…QLTV, PLEE…KHVE, ANSR…HLKI, AVEK…LVDD, PDKW…SSLE, GLIS…ERRI, QVSL…MEMV, KSKW…ILGH, LSQQ…LEDL, LARW…LQSV, LAEH…SHAC, MSTL…ADAL, VALK…QGQC, CGLI…LRVS, LSIW…KDFT, AQRT…QTQA, RIQD…LQDC, VSEL…LRSC, QLAL…LESV, IDQW…VEDL, VKDH…FGQV, TQLE…QNKE, QILQ…LENL, KIQM…VSRL, DRII…LEGA, LSKW…LEKL, VRLH…RMQL, NNVV…YSDW, YGST…LEKG, LHLA…LEAK, VKDH…QRVY, RSLE…KSLK, AELW…REQD, LQRT…IQVS, VTNL…LNKA, LSEK…LEKS, LVSR…TQEA, ILAR…LEDT, TSVY…CESR, MVQS…LTEI, YSRC…LQRC, MVQW…LEDA, VDEW…GKLV, KQEL…EEGK, AMSQ…LSKL, NQAL…LQDA, AKDM…PKEA, and VVQY…PSAH. Positions 314–8666 form a coiled coil; it reads RDDRLILKET…DLEKLLDMSS (8353 aa). Residue Lys-377 is modified to Phosphoserine. Phosphoserine is present on Ser-732. The disordered stretch occupies residues 1288–1310; that stretch reads KKRDLQEQMEQAQQGGQAGPGQE. Thr-2268 carries the phosphothreonine modification. Ser-5655 bears the Phosphoserine mark. A disordered region spans residues 5868 to 5894; sequence PVTEESGEEGTNSEISSPPACRSPSPV. Spectrin repeat units follow at residues 5971 to 6080, 6081 to 6187, 6377 to 6488, 6489 to 6584, 6585 to 6694, 6695 to 6798, 6799 to 6905, 6906 to 7023, 7024 to 7131, 7132 to 7240, 7241 to 7353, 7354 to 7457, 7458 to 7561, 7562 to 7674, 7675 to 7786, 7787 to 7886, 7887 to 8000, 8001 to 8109, and 8110 to 8221; these read LERQ…LEEK, LSDQ…SLGE, RQSI…RLQQ, ILRF…RSSL, HQNL…LEMW, SHLD…TILK, HWTR…QEKL, HQLQ…LEGL, LESW…LTSA, LGQW…SKAL, LQLW…LQAG, VVDY…LQSF, LLQH…RGII, DSQI…LAFL, LKDW…NEWA, VFSE…LKET, LVAV…IEET, WRLW…LKHF, and ISQR…VRLP. Phosphoserine occurs at positions 8225 and 8227. Residues 8237–8287 form a disordered region; the sequence is TALSDLRWQDPSADGMPSPQPSSNPSLSLPQPLRSERSGRDTPASVDSIPL. Over residues 8257–8269 the composition is skewed to low complexity; it reads PSSNPSLSLPQPL. Thr-8278 is modified (phosphothreonine). Phosphoserine occurs at positions 8281, 8284, and 8308. Spectrin repeat units lie at residues 8332 to 8440, 8441 to 8550, and 8551 to 8668; these read SSLE…MKQN, LQKW…LQDA, and LMQC…SSSQ. Thr-8363 is modified (phosphothreonine). The interval 8673 to 8735 is disordered; that stretch reads SWSSADELDT…SDSSRSDPRP (63 aa). Polar residues-rich tracts occupy residues 8682–8698 and 8706–8718; these read TSGS…PNRQ and SLSQ…SSPK. Residues 8721–8735 are compositionally biased toward basic and acidic residues; that stretch reads STRDGSDSSRSDPRP. Residues 8740-8799 enclose the KASH domain; it reads RAFLFRILRAALPFQLLLLLLIGLTCLVPMSEKDYSCALSNNFARSFHPMLRYTNGPPPL. The helical; Anchor for type IV membrane protein transmembrane segment at 8749-8769 threads the bilayer; sequence AALPFQLLLLLLIGLTCLVPM. Over 8770 to 8799 the chain is Perinuclear space; the sequence is SEKDYSCALSNNFARSFHPMLRYTNGPPPL.

Belongs to the nesprin family. Core component of LINC complexes which are composed of inner nuclear membrane SUN domain-containing proteins coupled to outer nuclear membrane KASH domain-containing nesprins. SUN and KASH domain-containing proteins seem to bind each other promiscuously; however, differentially expression of LINC complex constituents can give rise to specific assemblies. At least SUN1/2-containing core LINC complexes are proposed to be hexameric composed of three protomers of each KASH and SUN domain-containing protein. The SUN2:SYNE1/KASH1 LINC complex is a heterohexamer; the homotrimeric cloverleave-like conformation of the SUN domain is a prerequisite for LINC complex formation in which three separate SYNE1/KASH1 peptides bind at the interface of adjacent SUN domains. Self-associates. Interacts with SYNE3. Interacts with SUN3; proposed to form a spermatogenesis-specific LINC complex with SUN3 during sperm head formation. May interact with MUSK. Interacts with SPAG4/SUN4. Interacts with EMD and LMNA in vitro. Interacts with F-actin via its N-terminal domain. Interacts with DCTN1 and DYNC1I1/2; suggesting the association with the dynein-dynactin motor complex. Interacts (via KASH domain) with TMEM258. The disulfid bond with SUN1 or SUN2 is required for stability of the respective LINC complex under tensile forces. Expressed in C2F3 and CH310T1/2 cells, brain and skeletal muscle (at protein level).

The protein localises to the nucleus outer membrane. It localises to the nucleus. Its subcellular location is the nucleus envelope. The protein resides in the cytoplasm. It is found in the cytoskeleton. The protein localises to the myofibril. It localises to the sarcomere. Its function is as follows. Multi-isomeric modular protein which forms a linking network between organelles and the actin cytoskeleton to maintain the subcellular spatial organization. As a component of the LINC (LInker of Nucleoskeleton and Cytoskeleton) complex involved in the connection between the nuclear lamina and the cytoskeleton. The nucleocytoplasmic interactions established by the LINC complex play an important role in the transmission of mechanical forces across the nuclear envelope and in nuclear movement and positioning. May be involved in nucleus-centrosome attachment. During interkinetic nuclear migration (INM) at G2 phase and nuclear migration in neural progenitors its LINC complex association with SUN1/2 and probably association with cytoplasmic dynein-dynactin motor complexes functions to pull the nucleus toward the centrosome; SYNE1 and SYNE2 seem to act redundantly in cerebellum, midbrain, brain stem, and other brain regions except cerebral cortex and hippocampus. Required for centrosome migration to the apical cell surface during early ciliogenesis. May be involved in nuclear remodeling during sperm head formation in spermatogenesis; a probable SUN3:SYNE1/KASH1 LINC complex may tether spermatid nuclei to posterior cytoskeletal structures such as the manchette. The polypeptide is Nesprin-1 (Mus musculus (Mouse)).